The chain runs to 412 residues: Short-chain specific acyl-CoA dehydrogenase, mitochondrial (412 aa).

A mitochondrion-targeting transit peptide spans 1–24 (MAAALLARASGPARRALCPRAWRQ). Residue Thr27 is modified to Phosphothreonine. The residue at position 51 (Lys51) is an N6-acetyllysine; alternate. Lys51 is modified (N6-succinyllysine; alternate). Position 72 is an N6-acetyllysine (Lys72). Lys129 carries the N6-acetyllysine; alternate modification. Lys129 is subject to N6-succinyllysine; alternate. Residues 152–161 (FALSEPGNGS) and 185–187 (WIT) each bind FAD. Ser161 contributes to the substrate binding site. Lys208 bears the N6-acetyllysine mark. The residue at position 262 (Lys262) is an N6-acetyllysine; alternate. Lys262 carries the post-translational modification N6-succinyllysine; alternate. 269–272 (DMGR) is a substrate binding site. Residue Arg297 coordinates FAD. Lys306 is subject to N6-acetyllysine; alternate. Lys306 is modified (N6-succinyllysine; alternate). FAD contacts are provided by residues Gln308 and 365 to 369 (QILGG). The Proton acceptor role is filled by Glu392. Gly393 contacts substrate. An FAD-binding site is contributed by 394 to 396 (TSE).

It belongs to the acyl-CoA dehydrogenase family. In terms of assembly, homotetramer. The cofactor is FAD.

The protein localises to the mitochondrion matrix. The enzyme catalyses a short-chain 2,3-saturated fatty acyl-CoA + oxidized [electron-transfer flavoprotein] + H(+) = a short-chain (2E)-enoyl-CoA + reduced [electron-transfer flavoprotein]. It catalyses the reaction butanoyl-CoA + oxidized [electron-transfer flavoprotein] + H(+) = (2E)-butenoyl-CoA + reduced [electron-transfer flavoprotein]. It carries out the reaction pentanoyl-CoA + oxidized [electron-transfer flavoprotein] + H(+) = (2E)-pentenoyl-CoA + reduced [electron-transfer flavoprotein]. The catalysed reaction is hexanoyl-CoA + oxidized [electron-transfer flavoprotein] + H(+) = (2E)-hexenoyl-CoA + reduced [electron-transfer flavoprotein]. Its pathway is lipid metabolism; mitochondrial fatty acid beta-oxidation. In terms of biological role, short-chain specific acyl-CoA dehydrogenase is one of the acyl-CoA dehydrogenases that catalyze the first step of mitochondrial fatty acid beta-oxidation, an aerobic process breaking down fatty acids into acetyl-CoA and allowing the production of energy from fats. The first step of fatty acid beta-oxidation consists in the removal of one hydrogen from C-2 and C-3 of the straight-chain fatty acyl-CoA thioester, resulting in the formation of trans-2-enoyl-CoA. Among the different mitochondrial acyl-CoA dehydrogenases, short-chain specific acyl-CoA dehydrogenase acts specifically on acyl-CoAs with saturated 4 to 6 carbons long primary chains. The protein is Short-chain specific acyl-CoA dehydrogenase, mitochondrial (ACADS) of Homo sapiens (Human).